The sequence spans 208 residues: Uracil phosphoribosyltransferase (208 aa).

5-phospho-alpha-D-ribose 1-diphosphate is bound by residues Arg78, Arg103, and Asp130–Ser138. Uracil is bound by residues Ile193 and Gly198 to Ala200. Residue Asp199 coordinates 5-phospho-alpha-D-ribose 1-diphosphate.

This sequence belongs to the UPRTase family. It depends on Mg(2+) as a cofactor.

It carries out the reaction UMP + diphosphate = 5-phospho-alpha-D-ribose 1-diphosphate + uracil. Its pathway is pyrimidine metabolism; UMP biosynthesis via salvage pathway; UMP from uracil: step 1/1. Its activity is regulated as follows. Allosterically activated by GTP. Catalyzes the conversion of uracil and 5-phospho-alpha-D-ribose 1-diphosphate (PRPP) to UMP and diphosphate. This chain is Uracil phosphoribosyltransferase, found in Glaesserella parasuis serovar 5 (strain SH0165) (Haemophilus parasuis).